We begin with the raw amino-acid sequence, 397 residues long: L-cysteine desulfidase (397 aa).

The Proton acceptor role is filled by Cys-23. Residues Cys-288, Cys-330, and Cys-337 each contribute to the [4Fe-4S] cluster site.

It belongs to the L-cysteine desulfidase family. As to quaternary structure, homotrimer. Requires [4Fe-4S] cluster as cofactor.

It carries out the reaction L-cysteine + H2O = hydrogen sulfide + pyruvate + NH4(+) + H(+). Its function is as follows. Catalyzes the cleavage of L-cysteine to form 2-aminoprop-2-enoate and sulfide. The former then spontaneously hydrolyzes to pyruvate and NH(3). May be responsible for the production of sulfide required for the biosynthesis of iron-sulfur centers in this archaea. This chain is L-cysteine desulfidase, found in Methanococcus maripaludis (strain C5 / ATCC BAA-1333).